The chain runs to 359 residues: Doublesex- and mab-3-related transcription factor B1 (359 aa).

Residues 7 to 54 constitute a DNA-binding region (DM); the sequence is CSRCRNHGYLVPVKGHTGKCRWKQCICDKCYLITERQKIMAAQKVLRT. 2 disordered regions span residues 111–149 and 262–359; these read PPQAPSPGPSTFQLGPSGRPGPSTFQPGPGAPGGLRDRS and SGLV…EQSN. Pro residues-rich tracts occupy residues 277 to 299 and 315 to 325; these read CSPPPPPPPPPPPPLPAPPPQPQ and LPPPPPPPSPP. Positions 348–359 are enriched in polar residues; the sequence is EPSQDSPQEQSN.

This sequence belongs to the DMRT family. In terms of tissue distribution, brain.

It localises to the nucleus. This Mus musculus (Mouse) protein is Doublesex- and mab-3-related transcription factor B1 (Dmrtb1).